The following is a 100-amino-acid chain: Aspartyl/glutamyl-tRNA(Asn/Gln) amidotransferase subunit C (100 aa).

Belongs to the GatC family. As to quaternary structure, heterotrimer of A, B and C subunits.

It carries out the reaction L-glutamyl-tRNA(Gln) + L-glutamine + ATP + H2O = L-glutaminyl-tRNA(Gln) + L-glutamate + ADP + phosphate + H(+). The catalysed reaction is L-aspartyl-tRNA(Asn) + L-glutamine + ATP + H2O = L-asparaginyl-tRNA(Asn) + L-glutamate + ADP + phosphate + 2 H(+). In terms of biological role, allows the formation of correctly charged Asn-tRNA(Asn) or Gln-tRNA(Gln) through the transamidation of misacylated Asp-tRNA(Asn) or Glu-tRNA(Gln) in organisms which lack either or both of asparaginyl-tRNA or glutaminyl-tRNA synthetases. The reaction takes place in the presence of glutamine and ATP through an activated phospho-Asp-tRNA(Asn) or phospho-Glu-tRNA(Gln). This is Aspartyl/glutamyl-tRNA(Asn/Gln) amidotransferase subunit C from Streptococcus pneumoniae (strain Hungary19A-6).